A 244-amino-acid polypeptide reads, in one-letter code: MRNIKLIIEFDGTNFCGWQRQVKDRTVQGCLENAILKITGEKSLTNGSSRTDGGVHAKAMVANFITNSSIPGEKFREALNTKLPDDISIIKSEEVDMEFHARYSSKGKMYSYTIVNRYEKLAFGKQYLHHVRKELNVEDMKKACEYFLGKHDFKAFMSPGSSAKTTVRTITDFYIEENKNVIRIFISADGFLYNMVRIIVGTLINVGTGKTKLQDVNNIINDGIRKNAGMCVPPNGLVLEKVFY.

The active-site Nucleophile is aspartate 52. Tyrosine 110 serves as a coordination point for substrate.

The protein belongs to the tRNA pseudouridine synthase TruA family. Homodimer.

It carries out the reaction uridine(38/39/40) in tRNA = pseudouridine(38/39/40) in tRNA. In terms of biological role, formation of pseudouridine at positions 38, 39 and 40 in the anticodon stem and loop of transfer RNAs. This Clostridium botulinum (strain Alaska E43 / Type E3) protein is tRNA pseudouridine synthase A.